The chain runs to 136 residues: Probable endoribonuclease MazF7 (136 aa).

The tract at residues 115–136 (TGPERGEAATHSPVRWTGGRDP) is disordered.

This sequence belongs to the PemK/MazF family. Forms a complex with cognate antitoxin MazE7.

In terms of biological role, toxic component of a type II toxin-antitoxin (TA) system. Upon expression in E.coli and M.smegmatis inhibits cell growth and colony formation. Its toxic effect is neutralized by coexpression with cognate antitoxin MazE7. Probably an endoribonuclease. The polypeptide is Probable endoribonuclease MazF7 (mazF7) (Mycobacterium tuberculosis (strain ATCC 25618 / H37Rv)).